We begin with the raw amino-acid sequence, 194 residues long: Small ribosomal subunit protein uS4c (194 aa).

Residues 82-143 enclose the S4 RNA-binding domain; it reads MRLDNILFRL…KERSKVLIQN (62 aa).

This sequence belongs to the universal ribosomal protein uS4 family. As to quaternary structure, part of the 30S ribosomal subunit. Contacts protein S5. The interaction surface between S4 and S5 is involved in control of translational fidelity.

The protein localises to the plastid. Its subcellular location is the chloroplast. One of the primary rRNA binding proteins, it binds directly to 16S rRNA where it nucleates assembly of the body of the 30S subunit. Its function is as follows. With S5 and S12 plays an important role in translational accuracy. In Cypella sp. (strain Porto Alegre 027), this protein is Small ribosomal subunit protein uS4c (rps4).